Consider the following 282-residue polypeptide: Bifunctional protein FolD (282 aa).

NADP(+)-binding positions include Gly-166 to Ser-168 and Ile-232.

The protein belongs to the tetrahydrofolate dehydrogenase/cyclohydrolase family. Homodimer.

The catalysed reaction is (6R)-5,10-methylene-5,6,7,8-tetrahydrofolate + NADP(+) = (6R)-5,10-methenyltetrahydrofolate + NADPH. It catalyses the reaction (6R)-5,10-methenyltetrahydrofolate + H2O = (6R)-10-formyltetrahydrofolate + H(+). It participates in one-carbon metabolism; tetrahydrofolate interconversion. In terms of biological role, catalyzes the oxidation of 5,10-methylenetetrahydrofolate to 5,10-methenyltetrahydrofolate and then the hydrolysis of 5,10-methenyltetrahydrofolate to 10-formyltetrahydrofolate. The chain is Bifunctional protein FolD from Histophilus somni (strain 129Pt) (Haemophilus somnus).